Consider the following 171-residue polypeptide: Translation initiation factor IF-3 (171 aa).

This sequence belongs to the IF-3 family. As to quaternary structure, monomer.

Its subcellular location is the cytoplasm. In terms of biological role, IF-3 binds to the 30S ribosomal subunit and shifts the equilibrium between 70S ribosomes and their 50S and 30S subunits in favor of the free subunits, thus enhancing the availability of 30S subunits on which protein synthesis initiation begins. This is Translation initiation factor IF-3 from Listeria innocua serovar 6a (strain ATCC BAA-680 / CLIP 11262).